The sequence spans 383 residues: S-adenosylmethionine synthase (383 aa).

His15 is a binding site for ATP. Asp17 is a Mg(2+) binding site. A K(+)-binding site is contributed by Glu43. L-methionine contacts are provided by Glu56 and Gln99. The tract at residues 99 to 109 is flexible loop; sequence QSPDINQGVDR. Residues 164-166, 230-231, Asp239, 245-246, Ala262, and Lys266 each bind ATP; these read DAK, RF, and RK. An L-methionine-binding site is contributed by Asp239. L-methionine is bound at residue Lys270.

It belongs to the AdoMet synthase family. Homotetramer; dimer of dimers. Requires Mg(2+) as cofactor. The cofactor is K(+).

The protein resides in the cytoplasm. It catalyses the reaction L-methionine + ATP + H2O = S-adenosyl-L-methionine + phosphate + diphosphate. The protein operates within amino-acid biosynthesis; S-adenosyl-L-methionine biosynthesis; S-adenosyl-L-methionine from L-methionine: step 1/1. In terms of biological role, catalyzes the formation of S-adenosylmethionine (AdoMet) from methionine and ATP. The overall synthetic reaction is composed of two sequential steps, AdoMet formation and the subsequent tripolyphosphate hydrolysis which occurs prior to release of AdoMet from the enzyme. This Shewanella baltica (strain OS155 / ATCC BAA-1091) protein is S-adenosylmethionine synthase.